The primary structure comprises 647 residues: Threonine--tRNA ligase (647 aa).

Residues methionine 1–threonine 61 enclose the TGS domain. The interval aspartate 240–proline 538 is catalytic. Residues cysteine 334, histidine 385, and histidine 515 each coordinate Zn(2+).

The protein belongs to the class-II aminoacyl-tRNA synthetase family. As to quaternary structure, homodimer. The cofactor is Zn(2+).

Its subcellular location is the cytoplasm. It catalyses the reaction tRNA(Thr) + L-threonine + ATP = L-threonyl-tRNA(Thr) + AMP + diphosphate + H(+). In terms of biological role, catalyzes the attachment of threonine to tRNA(Thr) in a two-step reaction: L-threonine is first activated by ATP to form Thr-AMP and then transferred to the acceptor end of tRNA(Thr). Also edits incorrectly charged L-seryl-tRNA(Thr). The protein is Threonine--tRNA ligase of Streptococcus pyogenes serotype M6 (strain ATCC BAA-946 / MGAS10394).